Reading from the N-terminus, the 622-residue chain is MALLQISEPGMAPAPHQRRLAVGIDLGTTNSLVAAVRNSVPEVLPDEAGRVLLPSVVRYLEKGGRRIGHEAKEQAATDPRNTIVSVKRFMGRGKAEVEGAANAPYEFVDAPGMVQIRTIDGVKSPVEVSAEILATLRYRAEDSLGDDLVGAVITVPAYFDEAQRQATKDAARLAGLNVLRLLNEPTAAAIAYGLDNGSEGLYAVYDLGGGTFDLSILKLTKGVFEVLAAGGDSALGGDDFDHALFGHVLAQAGIDVKTLAPEDVRLLLDRVRVLKEALSSAPQASLDVTLSGGAHLVQTISHDTFASLVEPLVQRTLTPTRKALRDAQVTSADIKGVVLVGGATRMPVIRDAVAKYFGQPPLVNLDPDQVVALGAAIQADLLAGNRGTGDDWLLLDVIPLSLGVETMGGLVEKIIPRNSTIPIARAQEFTTFKDGQTAMAIHVVQGERELVADCRSLARFELRGIPPMTAGAARIRVTYQVDADGLLSVFAREQLSGVEASVVVKPSYGLADDDIAKMLEDSFKTAEIDMRARALREAQVEAERMLEATQAALAADGELLDADERTQVDTLAAALRAVAQGDDTNAIEAATKALAEGTDEFAARRMDKSIKRALSGRRLDEI.

The protein belongs to the heat shock protein 70 family.

Chaperone involved in the maturation of iron-sulfur cluster-containing proteins. Has a low intrinsic ATPase activity which is markedly stimulated by HscB. This chain is Chaperone protein HscA homolog, found in Burkholderia lata (strain ATCC 17760 / DSM 23089 / LMG 22485 / NCIMB 9086 / R18194 / 383).